The primary structure comprises 636 residues: Epsin-3 (636 aa).

6 residues coordinate a 1,2-diacyl-sn-glycero-3-phospho-(1D-myo-inositol-4,5-bisphosphate): Arg8, Lys11, Arg25, Asn30, Arg63, and His73. Residues 12 to 144 (NIVHNYSEAE…KDEERLRQER (133 aa)) form the ENTH domain. The segment at 153-503 (RMALEGMGIG…TPESFLGPSA (351 aa)) is disordered. Residues 174-189 (GSPSSYTSASSSPRYA) show a composition bias toward low complexity. Phosphoserine occurs at positions 184 and 185. 2 consecutive UIM domains span residues 202-221 (EEEL…AERP) and 229-248 (DEDL…HEKG). Basic and acidic residues-rich tracts occupy residues 214–231 (SREE…RDED) and 242–256 (RQEH…KGDD). Residue Ser257 is modified to Phosphoserine. Over residues 270-288 (RQRDREPEREERKEEEKLK) the composition is skewed to basic and acidic residues. A run of 5 repeats spans residues 315 to 317 (DPW), 338 to 340 (DPW), 365 to 367 (EPW), 381 to 383 (DPW), and 398 to 400 (DPW). The segment at 315 to 400 (DPWDIPGLRP…KLPSTGADPW (86 aa)) is 5 X 3 AA repeats of [DE]-P-W. The segment covering 426-435 (ESTEPKESRD) has biased composition (basic and acidic residues). Tandem repeats lie at residues 523 to 525 (NPF) and 536 to 538 (NPF). Positions 523 to 635 (NPFLTGLGVP…LPPQAGTNPF (113 aa)) are 3 X 3 AA repeats of N-P-F. Over residues 607 to 616 (PPPASLPQPL) the composition is skewed to pro residues. The interval 607–636 (PPPASLPQPLLPTSGPMGPLPPQAGTNPFL) is disordered. Residues 633-635 (NPF) form repeat 3.

This sequence belongs to the epsin family.

The protein localises to the cytoplasm. It is found in the cell cortex. It localises to the perinuclear region. The protein resides in the cytoplasmic vesicle. Its subcellular location is the clathrin-coated vesicle. The polypeptide is Epsin-3 (Epn3) (Mus musculus (Mouse)).